Here is a 201-residue protein sequence, read N- to C-terminus: Small ribosomal subunit protein uS4c (201 aa).

The interval 15–43 (LGALPGLTRKTPKSGSNQKKKFHSGKKEQ) is disordered. Positions 89–150 (MRLDNILFRL…NQRSKRLVQN (62 aa)) constitute an S4 RNA-binding domain.

Belongs to the universal ribosomal protein uS4 family. As to quaternary structure, part of the 30S ribosomal subunit. Contacts protein S5. The interaction surface between S4 and S5 is involved in control of translational fidelity.

It localises to the plastid. It is found in the chloroplast. One of the primary rRNA binding proteins, it binds directly to 16S rRNA where it nucleates assembly of the body of the 30S subunit. Functionally, with S5 and S12 plays an important role in translational accuracy. This Sorghum bicolor (Sorghum) protein is Small ribosomal subunit protein uS4c (rps4).